We begin with the raw amino-acid sequence, 391 residues long: Formate-dependent phosphoribosylglycinamide formyltransferase (391 aa).

N(1)-(5-phospho-beta-D-ribosyl)glycinamide is bound by residues 20–21 (EL) and E80. ATP is bound by residues R112, K153, 158-163 (SSGKGQ), 193-196 (EGFI), and E201. The ATP-grasp domain occupies 117-306 (RLAAEELDLS…EFALHVRAFT (190 aa)). 2 residues coordinate Mg(2+): E265 and E277. N(1)-(5-phospho-beta-D-ribosyl)glycinamide contacts are provided by residues D284, K354, and 361–362 (RR).

The protein belongs to the PurK/PurT family. Homodimer.

It carries out the reaction N(1)-(5-phospho-beta-D-ribosyl)glycinamide + formate + ATP = N(2)-formyl-N(1)-(5-phospho-beta-D-ribosyl)glycinamide + ADP + phosphate + H(+). The protein operates within purine metabolism; IMP biosynthesis via de novo pathway; N(2)-formyl-N(1)-(5-phospho-D-ribosyl)glycinamide from N(1)-(5-phospho-D-ribosyl)glycinamide (formate route): step 1/1. In terms of biological role, involved in the de novo purine biosynthesis. Catalyzes the transfer of formate to 5-phospho-ribosyl-glycinamide (GAR), producing 5-phospho-ribosyl-N-formylglycinamide (FGAR). Formate is provided by PurU via hydrolysis of 10-formyl-tetrahydrofolate. The sequence is that of Formate-dependent phosphoribosylglycinamide formyltransferase from Vibrio parahaemolyticus serotype O3:K6 (strain RIMD 2210633).